A 417-amino-acid polypeptide reads, in one-letter code: Serine hydroxymethyltransferase 1 (417 aa).

(6S)-5,6,7,8-tetrahydrofolate is bound by residues L121 and 125–127 (GHL). K229 is subject to N6-(pyridoxal phosphate)lysine. (6S)-5,6,7,8-tetrahydrofolate is bound at residue 354–356 (SPF).

It belongs to the SHMT family. In terms of assembly, homodimer. The cofactor is pyridoxal 5'-phosphate.

It is found in the cytoplasm. The enzyme catalyses (6R)-5,10-methylene-5,6,7,8-tetrahydrofolate + glycine + H2O = (6S)-5,6,7,8-tetrahydrofolate + L-serine. Its pathway is one-carbon metabolism; tetrahydrofolate interconversion. It participates in amino-acid biosynthesis; glycine biosynthesis; glycine from L-serine: step 1/1. Functionally, catalyzes the reversible interconversion of serine and glycine with tetrahydrofolate (THF) serving as the one-carbon carrier. This reaction serves as the major source of one-carbon groups required for the biosynthesis of purines, thymidylate, methionine, and other important biomolecules. Also exhibits THF-independent aldolase activity toward beta-hydroxyamino acids, producing glycine and aldehydes, via a retro-aldol mechanism. In Pseudomonas fluorescens (strain ATCC BAA-477 / NRRL B-23932 / Pf-5), this protein is Serine hydroxymethyltransferase 1.